The chain runs to 380 residues: NADPH quinone oxidoreductase (380 aa).

Residues 1–17 (MSSFLSKRFISTTQRAM) constitute a mitochondrion transit peptide.

It belongs to the zinc-containing alcohol dehydrogenase family. Quinone oxidoreductase subfamily. Homodimer.

It is found in the mitochondrion. It catalyses the reaction a quinone + NADH + H(+) = a quinol + NAD(+). It carries out the reaction a quinone + NADPH + H(+) = a quinol + NADP(+). Functionally, NADPH quinone oxidoreductase that efficiently reduces 1,4-benzoquinone, whereas no activities are found for menadiones and methoxyquinones. This chain is NADPH quinone oxidoreductase, found in Kluyveromyces marxianus (Yeast).